The sequence spans 150 residues: Thyroid hormone-inducible hepatic protein (150 aa).

The tract at residues lysine 83–aspartate 105 is disordered. Phosphoserine is present on serine 90. Residues serine 90 to aspartate 105 show a composition bias toward acidic residues.

This sequence belongs to the SPOT14 family. In terms of assembly, homodimer. Heterodimer with MID1IP1. Interacts with THRB and PLAGL1. Highly expressed in liver, lactating mammary gland, epididymal, retroperitoneal and brown fat. Mainly expressed in tissues that synthesize triglycerides.

It is found in the nucleus. Its subcellular location is the cytoplasm. Functionally, plays a role in the regulation of lipogenesis, especially in lactating mammary gland. Important for the biosynthesis of triglycerides with medium-length fatty acid chains. May modulate lipogenesis by interacting with MID1IP1 and preventing its interaction with ACACA. May function as transcriptional coactivator. May modulate the transcription factor activity of THRB. The protein is Thyroid hormone-inducible hepatic protein (Thrsp) of Rattus norvegicus (Rat).